The primary structure comprises 796 residues: MKFSFSWLKSVLDTKADAKLIAEKLTSLGLEIESVEDASAALKSFRVARVLTAEKHPQADKLQVLSVDLGDGNPLQVVCGAPNARAGLVGVLGLPGAVVPANGMELRKSAIRGVESNGMMCSTRELGLGEEHDGIIELPGDAPLGTTFADYLGSDPVFDVAITPNRPDCMGVYGIARDLAAAGLGVLKPIAAQSVAGSFPCPVEVRTDDPEGCPAFYGRVIRGVRNGPSPKWLQDYLKSAGQRPISALVDITNYVMLGYGRPAHAYDVAKLSGAVVARKAREGETCLALNGKEYGLQPWMTVIADDAGVHDIAGIMGGEHSGCSDETTDVLLEVAYFTPANIARTGQALALTSDARGRFERGVDPAFLDTGLDLLTSLILEICGGEASEVVRAGEPPLARKALAYDPDLAGNLGGIDVAAAEQKRILGALGFDVADDWTVAVPTWRPDVAGPPDIVEEVIRVHGLDAVPSTPLPRADGVAKPTATPAQMLERRVRRAAASRGLHEAVTWSFLPEAEAARFADGEALWSLANPISEDLKVMRPSLLPGLLSAAQRNLHRGATSIRLFEIGRRYLRGAGGASDEKLSLAVVLAGDRIARGWASGKAQPFDAFDAKAEALALLAEAGAPVDNLQVMGEAGPQFHPGQSATLRLGPKQVLARFGMLHPATARAFDLDGPVAVVELFLDRIPAKKGAGQFARPHYAPPALQAVTRDFAFLVDASVPAGDLLRAVKGADKQAIVAARVFDDFRGQGVAEGQKSLAIEVTLQPVDKSFDEAALKAIADKVVAAAGKLGAELRR.

The 111-residue stretch at 39–149 (SAALKSFRVA…GDAPLGTTFA (111 aa)) folds into the tRNA-binding domain. Residues 398 to 470 (LARKALAYDP…RVHGLDAVPS (73 aa)) form the B5 domain. Aspartate 448, aspartate 454, glutamate 457, and glutamate 458 together coordinate Mg(2+). The FDX-ACB domain occupies 703 to 795 (PALQAVTRDF…AAGKLGAELR (93 aa)).

It belongs to the phenylalanyl-tRNA synthetase beta subunit family. Type 1 subfamily. In terms of assembly, tetramer of two alpha and two beta subunits. It depends on Mg(2+) as a cofactor.

The protein resides in the cytoplasm. The enzyme catalyses tRNA(Phe) + L-phenylalanine + ATP = L-phenylalanyl-tRNA(Phe) + AMP + diphosphate + H(+). This is Phenylalanine--tRNA ligase beta subunit from Novosphingobium aromaticivorans (strain ATCC 700278 / DSM 12444 / CCUG 56034 / CIP 105152 / NBRC 16084 / F199).